We begin with the raw amino-acid sequence, 241 residues long: Uridylate kinase (241 aa).

15-18 serves as a coordination point for ATP; sequence KLSG. The tract at residues 23–28 is involved in allosteric activation by GTP; that stretch reads GTEGFG. Position 57 (G57) interacts with UMP. Positions 58 and 62 each coordinate ATP. Residues D77 and 138–145 each bind UMP; that span reads TGNPFFTT. ATP contacts are provided by T165, F171, and D174.

This sequence belongs to the UMP kinase family. In terms of assembly, homohexamer.

The protein localises to the cytoplasm. It carries out the reaction UMP + ATP = UDP + ADP. It participates in pyrimidine metabolism; CTP biosynthesis via de novo pathway; UDP from UMP (UMPK route): step 1/1. With respect to regulation, allosterically activated by GTP. Inhibited by UTP. Functionally, catalyzes the reversible phosphorylation of UMP to UDP. The polypeptide is Uridylate kinase (Salmonella choleraesuis (strain SC-B67)).